Consider the following 289-residue polypeptide: Complement C1q tumor necrosis factor-related protein 7 (289 aa).

Residues 1–16 form the signal peptide; that stretch reads MIVLLYVTSLAICASG. The tract at residues 36–134 is disordered; the sequence is IPGLPGPPGP…GDRGDQGDPG (99 aa). The Collagen-like domain occupies 38–139; it reads GLPGPPGPPG…QGDPGLPGVC (102 aa). Residues 48–61 show a composition bias toward low complexity; the sequence is ANGSPGPHGRIGLP. Residues 63–76 are compositionally biased toward basic and acidic residues; it reads RDGRDGRKGEKGEK. Residues 78–91 show a composition bias toward low complexity; that stretch reads TAGLKGKTGPLGLA. A compositionally biased stretch (basic and acidic residues) spans 93–102; the sequence is EKGDQGETGK. Positions 143–279 constitute a C1q domain; sequence SIVLKSAFSV…GFLLYVDTDY (137 aa).

Its subcellular location is the secreted. This is Complement C1q tumor necrosis factor-related protein 7 (C1qtnf7) from Mus musculus (Mouse).